A 642-amino-acid polypeptide reads, in one-letter code: Glutamyl-tRNA(Gln) amidotransferase subunit E (642 aa).

It belongs to the GatB/GatE family. GatE subfamily. In terms of assembly, heterodimer of GatD and GatE.

The enzyme catalyses L-glutamyl-tRNA(Gln) + L-glutamine + ATP + H2O = L-glutaminyl-tRNA(Gln) + L-glutamate + ADP + phosphate + H(+). In terms of biological role, allows the formation of correctly charged Gln-tRNA(Gln) through the transamidation of misacylated Glu-tRNA(Gln) in organisms which lack glutaminyl-tRNA synthetase. The reaction takes place in the presence of glutamine and ATP through an activated gamma-phospho-Glu-tRNA(Gln). The GatDE system is specific for glutamate and does not act on aspartate. This Aeropyrum pernix (strain ATCC 700893 / DSM 11879 / JCM 9820 / NBRC 100138 / K1) protein is Glutamyl-tRNA(Gln) amidotransferase subunit E.